The sequence spans 218 residues: Ribose-5-phosphate isomerase A (218 aa).

Residues 28 to 31, 81 to 84, and 94 to 97 each bind substrate; these read TGST, DGAD, and KGGG. Residue glutamate 103 is the Proton acceptor of the active site. Residue lysine 121 coordinates substrate.

Belongs to the ribose 5-phosphate isomerase family. As to quaternary structure, homodimer.

It catalyses the reaction aldehydo-D-ribose 5-phosphate = D-ribulose 5-phosphate. It functions in the pathway carbohydrate degradation; pentose phosphate pathway; D-ribose 5-phosphate from D-ribulose 5-phosphate (non-oxidative stage): step 1/1. Functionally, catalyzes the reversible conversion of ribose-5-phosphate to ribulose 5-phosphate. This chain is Ribose-5-phosphate isomerase A, found in Colwellia psychrerythraea (strain 34H / ATCC BAA-681) (Vibrio psychroerythus).